Reading from the N-terminus, the 246-residue chain is Exosome complex component Rrp41 (246 aa).

The protein belongs to the RNase PH family. Rrp41 subfamily. As to quaternary structure, component of the archaeal exosome complex. Forms a hexameric ring-like arrangement composed of 3 Rrp41-Rrp42 heterodimers. The hexameric ring associates with a trimer of Rrp4 and/or Csl4 subunits.

It localises to the cytoplasm. Catalytic component of the exosome, which is a complex involved in RNA degradation. Has 3'-&gt;5' exoribonuclease activity. Can also synthesize heteromeric RNA-tails. The protein is Exosome complex component Rrp41 of Pyrobaculum arsenaticum (strain DSM 13514 / JCM 11321 / PZ6).